A 433-amino-acid polypeptide reads, in one-letter code: Glutamate-1-semialdehyde 2,1-aminomutase (433 aa).

Lys-272 bears the N6-(pyridoxal phosphate)lysine mark.

It belongs to the class-III pyridoxal-phosphate-dependent aminotransferase family. HemL subfamily. As to quaternary structure, homodimer. Pyridoxal 5'-phosphate is required as a cofactor.

It is found in the cytoplasm. It catalyses the reaction (S)-4-amino-5-oxopentanoate = 5-aminolevulinate. It functions in the pathway porphyrin-containing compound metabolism; protoporphyrin-IX biosynthesis; 5-aminolevulinate from L-glutamyl-tRNA(Glu): step 2/2. The polypeptide is Glutamate-1-semialdehyde 2,1-aminomutase (Magnetococcus marinus (strain ATCC BAA-1437 / JCM 17883 / MC-1)).